We begin with the raw amino-acid sequence, 344 residues long: Protein L-Myc-1-A (344 aa).

Disordered regions lie at residues 100–162 and 209–261; these read RLTT…DDEI and PPEP…EDIV. 3 stretches are compositionally biased toward polar residues: residues 102-112, 123-133, and 236-255; these read TTASPRATNPQ, PGVNSIEQNAN, and PALQ…SGSS. A bHLH domain is found at 261–313; sequence VKKKNHNYLERKRRNDLRSRFLALREEVPSLTRSTKTPKVVVLSKATEFLKGL. The tract at residues 313 to 341 is leucine-zipper; it reads LVIQEQQLTAEKFKLWSRHQQLLRRISHL.

In terms of assembly, efficient DNA binding requires dimerization with another bHLH protein. Binds DNA as a heterodimer with MAX. In terms of tissue distribution, high levels in oocytes, modest levels in kidney and low levels in spleen.

The protein resides in the nucleus. The polypeptide is Protein L-Myc-1-A (mycl1-a) (Xenopus laevis (African clawed frog)).